The primary structure comprises 187 residues: MLLEKSLEEAPVVNRNGYWYFIHPITDGVPELPPELLREVAYRIVRALDSTDFDKIVCVEAMGIHLGALLSDMLDRPLVIVRKREYGLDGEVEITQEKGYGVEKLYLNGVSEGDRVVVVDDVISTGGTLVGLINALDDVGAEIEDVVVVVARGGLDRVREETGVDVKYLVRVEVSEDGVSVVESRYR.

The protein belongs to the purine/pyrimidine phosphoribosyltransferase family. Archaeal HPRT subfamily. As to quaternary structure, homodimer.

The protein localises to the cytoplasm. It carries out the reaction IMP + diphosphate = hypoxanthine + 5-phospho-alpha-D-ribose 1-diphosphate. The catalysed reaction is GMP + diphosphate = guanine + 5-phospho-alpha-D-ribose 1-diphosphate. The protein operates within purine metabolism; IMP biosynthesis via salvage pathway; IMP from hypoxanthine: step 1/1. Functionally, catalyzes a salvage reaction resulting in the formation of IMP that is energically less costly than de novo synthesis. The protein is Hypoxanthine/guanine phosphoribosyltransferase of Methanopyrus kandleri (strain AV19 / DSM 6324 / JCM 9639 / NBRC 100938).